The chain runs to 31 residues: Potassium channel toxin alpha-KTx 5.5 (31 aa).

3 disulfides stabilise this stretch: C3–C21, C8–C26, and C12–C28. A [R/K]XCQ motif region spans residues 6–9; it reads RRCE. Histidine amide is present on H31.

Expressed by the venom gland.

Its subcellular location is the secreted. Its function is as follows. Blocks small conductance calcium-activated potassium channels. In Hottentotta tamulus (Eastern Indian scorpion), this protein is Potassium channel toxin alpha-KTx 5.5.